Here is a 167-residue protein sequence, read N- to C-terminus: Secretion monitor (167 aa).

The first 36 residues, 1 to 36, serve as a signal peptide directing secretion; it reads MIGILNRWRQFGRRYFWPHLLLGMVAASFGLPQASA.

It belongs to the SecM family.

It localises to the cytoplasm. It is found in the cytosol. The protein resides in the periplasm. Functionally, regulates secA expression by translational coupling of the secM secA operon. Translational pausing at a specific Pro residue 5 residues before the end of the protein may allow disruption of a mRNA repressor helix that normally suppresses secA translation initiation. The polypeptide is Secretion monitor (Erwinia tasmaniensis (strain DSM 17950 / CFBP 7177 / CIP 109463 / NCPPB 4357 / Et1/99)).